The primary structure comprises 539 residues: Diacylglycerol O-acyltransferase 1 (539 aa).

Positions 1 to 104 (MAISDMPEST…NDGGEKIANG (104 aa)) are disordered. A compositionally biased stretch (polar residues) spans 33–52 (TETTEVSDSNSKTTDPDSGN). Over residues 56–80 (ESVRVRDSSTDESLARKSCEDDGSR) the composition is skewed to basic and acidic residues. Transmembrane regions (helical) follow at residues 143–163 (HAGL…RLII), 187–207 (WPLL…FVVE), 219–239 (VVLL…VFVI), 244–264 (SVVL…LKLV), 294–314 (YPYS…TLCY), 334–354 (VKLI…INPI), and 383–403 (VWLC…AELL). The FYXDWWN motif signature appears at 410 to 416 (FYKDWWN). The next 3 helical transmembrane spans lie at 451–471 (GVAI…CIAV), 473–493 (CHIF…LVLI), and 506–526 (VGNM…CVLL). His465 is a catalytic residue.

The protein belongs to the membrane-bound acyltransferase family. Sterol o-acyltransferase subfamily.

It is found in the endoplasmic reticulum membrane. It carries out the reaction an acyl-CoA + a 1,2-diacyl-sn-glycerol = a triacyl-sn-glycerol + CoA. It functions in the pathway glycerolipid metabolism; triacylglycerol biosynthesis. Its function is as follows. Major contributor to triacylglycerol (TAG) synthesis and oil accumulation in developing seeds. Catalyzes the acylation of the sn-3 hydroxy group of sn-1,2-diacylglycerol using acyl-CoA. Has a marked preference for oleoyl-CoA as substrate. This is Diacylglycerol O-acyltransferase 1 from Corylus americana (American hazelnut).